We begin with the raw amino-acid sequence, 332 residues long: Holliday junction branch migration complex subunit RuvB (332 aa).

The tract at residues 1 to 181 (MSRILDNEQM…FGITGHMEYY (181 aa)) is large ATPase domain (RuvB-L). ATP-binding positions include Leu20, Arg21, Gly62, Lys65, Thr66, Thr67, 128–130 (EDF), Arg171, Tyr181, and Arg218. Thr66 is a binding site for Mg(2+). The small ATPAse domain (RuvB-S) stretch occupies residues 182–252 (EEADLTEIVE…ITDQALSMLD (71 aa)). The head domain (RuvB-H) stretch occupies residues 255–332 (HEGLDYVDQK…EHLGYEYMEK (78 aa)). Arg291, Arg310, Arg312, and Arg315 together coordinate DNA.

It belongs to the RuvB family. As to quaternary structure, homohexamer. Forms an RuvA(8)-RuvB(12)-Holliday junction (HJ) complex. HJ DNA is sandwiched between 2 RuvA tetramers; dsDNA enters through RuvA and exits via RuvB. An RuvB hexamer assembles on each DNA strand where it exits the tetramer. Each RuvB hexamer is contacted by two RuvA subunits (via domain III) on 2 adjacent RuvB subunits; this complex drives branch migration. In the full resolvosome a probable DNA-RuvA(4)-RuvB(12)-RuvC(2) complex forms which resolves the HJ.

It localises to the cytoplasm. It carries out the reaction ATP + H2O = ADP + phosphate + H(+). Its function is as follows. The RuvA-RuvB-RuvC complex processes Holliday junction (HJ) DNA during genetic recombination and DNA repair, while the RuvA-RuvB complex plays an important role in the rescue of blocked DNA replication forks via replication fork reversal (RFR). RuvA specifically binds to HJ cruciform DNA, conferring on it an open structure. The RuvB hexamer acts as an ATP-dependent pump, pulling dsDNA into and through the RuvAB complex. RuvB forms 2 homohexamers on either side of HJ DNA bound by 1 or 2 RuvA tetramers; 4 subunits per hexamer contact DNA at a time. Coordinated motions by a converter formed by DNA-disengaged RuvB subunits stimulates ATP hydrolysis and nucleotide exchange. Immobilization of the converter enables RuvB to convert the ATP-contained energy into a lever motion, pulling 2 nucleotides of DNA out of the RuvA tetramer per ATP hydrolyzed, thus driving DNA branch migration. The RuvB motors rotate together with the DNA substrate, which together with the progressing nucleotide cycle form the mechanistic basis for DNA recombination by continuous HJ branch migration. Branch migration allows RuvC to scan DNA until it finds its consensus sequence, where it cleaves and resolves cruciform DNA. This chain is Holliday junction branch migration complex subunit RuvB, found in Streptococcus gordonii (strain Challis / ATCC 35105 / BCRC 15272 / CH1 / DL1 / V288).